The chain runs to 97 residues: MKIRPLHDRVIVKRKEIEAKSAGGIVLTGSAAGKSTRGEVLAVGRGRILENGEVKALDVKVGDIVIFNDGYGVKVEKIDNDEVLIMSESDILAIVEK.

The protein belongs to the GroES chaperonin family. Heptamer of 7 subunits arranged in a ring. Interacts with the chaperonin GroEL.

The protein localises to the cytoplasm. Together with the chaperonin GroEL, plays an essential role in assisting protein folding. The GroEL-GroES system forms a nano-cage that allows encapsulation of the non-native substrate proteins and provides a physical environment optimized to promote and accelerate protein folding. GroES binds to the apical surface of the GroEL ring, thereby capping the opening of the GroEL channel. The sequence is that of Co-chaperonin GroES from Sodalis glossinidius (strain morsitans).